The primary structure comprises 273 residues: Anthranilate synthase beta subunit 2, chloroplastic (273 aa).

Residues 1–47 constitute a chloroplast transit peptide; it reads MATAARLLPKIQSPASPAVAEARRRRPSSLRLGVTSGPARTLKQKLV. Positions 15 to 35 are disordered; that stretch reads ASPAVAEARRRRPSSLRLGVT. Residues 70 to 269 enclose the Glutamine amidotransferase type-1 domain; sequence PIIVIDNYDS…IKIIEGYEAL (200 aa). 121 to 123 provides a ligand contact to L-glutamine; that stretch reads GPG. The Nucleophile role is filled by Cys148. Residues Gln152 and 202–203 each bind L-glutamine; that span reads SL. Active-site residues include His243 and Glu245.

Heterotetramer consisting of two non-identical subunits: a beta subunit and a large alpha subunit. Expressed in roots and leaves.

It localises to the plastid. It is found in the chloroplast. It catalyses the reaction chorismate + L-glutamine = anthranilate + pyruvate + L-glutamate + H(+). It functions in the pathway amino-acid biosynthesis; L-tryptophan biosynthesis; L-tryptophan from chorismate: step 1/5. Its function is as follows. Part of a heterotetrameric complex that catalyzes the two-step biosynthesis of anthranilate, an intermediate in the biosynthesis of L-tryptophan. In the first step, the glutamine-binding beta subunit of anthranilate synthase (AS) provides the glutamine amidotransferase activity which generates ammonia as a substrate that, along with chorismate, is used in the second step, catalyzed by the large alpha subunit of AS to produce anthranilate. The protein is Anthranilate synthase beta subunit 2, chloroplastic of Oryza sativa subsp. japonica (Rice).